Here is a 543-residue protein sequence, read N- to C-terminus: CTP synthase (543 aa).

Positions 1–266 (MTKFIFVTGG…DDIICERFGI (266 aa)) are amidoligase domain. Serine 13 is a binding site for CTP. Serine 13 serves as a coordination point for UTP. Residues 14 to 19 (SLGKGI) and aspartate 71 contribute to the ATP site. Residues aspartate 71 and glutamate 140 each contribute to the Mg(2+) site. Residues 147-149 (DIE), 187-192 (KTKPTQ), and lysine 223 each bind CTP. UTP contacts are provided by residues 187–192 (KTKPTQ) and lysine 223. The 253-residue stretch at 291–543 (TVAIVGKYVE…VKAAIDHQNI (253 aa)) folds into the Glutamine amidotransferase type-1 domain. Glycine 354 provides a ligand contact to L-glutamine. Cysteine 381 functions as the Nucleophile; for glutamine hydrolysis in the catalytic mechanism. L-glutamine is bound by residues 382–385 (LGMQ), glutamate 404, and arginine 471. Active-site residues include histidine 516 and glutamate 518.

It belongs to the CTP synthase family. Homotetramer.

It carries out the reaction UTP + L-glutamine + ATP + H2O = CTP + L-glutamate + ADP + phosphate + 2 H(+). It catalyses the reaction L-glutamine + H2O = L-glutamate + NH4(+). The enzyme catalyses UTP + NH4(+) + ATP = CTP + ADP + phosphate + 2 H(+). The protein operates within pyrimidine metabolism; CTP biosynthesis via de novo pathway; CTP from UDP: step 2/2. With respect to regulation, allosterically activated by GTP, when glutamine is the substrate; GTP has no effect on the reaction when ammonia is the substrate. The allosteric effector GTP functions by stabilizing the protein conformation that binds the tetrahedral intermediate(s) formed during glutamine hydrolysis. Inhibited by the product CTP, via allosteric rather than competitive inhibition. Its function is as follows. Catalyzes the ATP-dependent amination of UTP to CTP with either L-glutamine or ammonia as the source of nitrogen. Regulates intracellular CTP levels through interactions with the four ribonucleotide triphosphates. This Psychrobacter sp. (strain PRwf-1) protein is CTP synthase.